Reading from the N-terminus, the 224-residue chain is UPF0758 protein Rpic_2712 (224 aa).

In terms of domain architecture, MPN spans Thr-102–Met-224. 3 residues coordinate Zn(2+): His-173, His-175, and Asp-186. Positions His-173 to Asp-186 match the JAMM motif motif.

It belongs to the UPF0758 family.

The chain is UPF0758 protein Rpic_2712 from Ralstonia pickettii (strain 12J).